The chain runs to 227 residues: Cytidylate kinase (227 aa).

ATP is bound at residue 12–20; that stretch reads GPSGAGKGT.

The protein belongs to the cytidylate kinase family. Type 1 subfamily.

The protein localises to the cytoplasm. It carries out the reaction CMP + ATP = CDP + ADP. The catalysed reaction is dCMP + ATP = dCDP + ADP. This Salmonella paratyphi B (strain ATCC BAA-1250 / SPB7) protein is Cytidylate kinase.